Here is a 423-residue protein sequence, read N- to C-terminus: Cop9 signalosome complex subunit 12 (423 aa).

The PCI domain occupies 232-418; that stretch reads GFFHLNEALL…RCIVFSKKEP (187 aa).

The protein belongs to the CSN12 family. As to quaternary structure, component of a COP9 signalosome-like (CSN) complex, composed of RRI1/CSN5, CSN9, RRI2/CSN10, PCI8/CSN11, CSN12 and CSI1. In the complex, it probably interacts directly with RRI1/CSN5, CSN9, RRI2/CSN10 and CSI1. Interacts with SEM1 and THP3.

The protein localises to the cytoplasm. Its subcellular location is the nucleus. Its function is as follows. Component of the COP9 signalosome (CSN) complex that acts as an regulator of the ubiquitin (Ubl) conjugation pathway by mediating the deneddylation of the cullin subunit of SCF-type E3 ubiquitin-protein ligase complexes. The CSN complex is involved in the regulation of the mating pheromone response. CSN12 forms a complex with THP3 that is recruited to transcribed genes and required for transcription elongation. The protein is Cop9 signalosome complex subunit 12 (CSN12) of Saccharomyces cerevisiae (strain ATCC 204508 / S288c) (Baker's yeast).